A 573-amino-acid polypeptide reads, in one-letter code: Proton-coupled zinc antiporter SLC30A9, mitochondrial (573 aa).

The segment at 66-108 (NCSTSGSGKDGSPTRPEEPKTTEKAQAAQPAAKGAGSKPQGLT) is disordered. The span at 90 to 104 (AQAAQPAAKGAGSKP) shows a compositional bias: low complexity. Transmembrane regions (helical) follow at residues 244 to 264 (VVMVAICINGLNFFFKLLAWV), 319 to 339 (GVGIFMMGAGLSWYHGIMGLL), 347 to 367 (LLWAYCILAGSLVSEGATLLV), 397 to 417 (VVLLEDAAAVLGVVLAAGCMG), and 429 to 449 (SLGSLGVGTLLGTVSAFLIYT). Residues 467–471 (LTEFL) carry the LXXLL motif motif.

This sequence belongs to the cation diffusion facilitator (CDF) transporter (TC 2.A.4) family. SLC30A subfamily.

It is found in the mitochondrion membrane. The protein localises to the nucleus. It localises to the endoplasmic reticulum. It carries out the reaction Zn(2+)(in) + 2 H(+)(out) = Zn(2+)(out) + 2 H(+)(in). Its function is as follows. Mitochondrial proton-coupled zinc ion antiporter mediating the export of zinc from the mitochondria and involved in zinc homeostasis, zinc mobilization as well as mitochondrial morphology and health. In nucleus, may function as a secondary coactivator for nuclear receptors. In Danio rerio (Zebrafish), this protein is Proton-coupled zinc antiporter SLC30A9, mitochondrial (slc30a9).